Here is a 336-residue protein sequence, read N- to C-terminus: Phosphate acetyltransferase (336 aa).

This sequence belongs to the phosphate acetyltransferase and butyryltransferase family.

Its subcellular location is the cytoplasm. The enzyme catalyses acetyl-CoA + phosphate = acetyl phosphate + CoA. It participates in metabolic intermediate biosynthesis; acetyl-CoA biosynthesis; acetyl-CoA from acetate: step 2/2. The chain is Phosphate acetyltransferase (pta) from Treponema pallidum (strain Nichols).